A 587-amino-acid polypeptide reads, in one-letter code: Sulfite reductase [NADPH] hemoprotein beta-component (587 aa).

Residues 1-13 (MQSTDNDLSQSPP) show a composition bias toward polar residues. Residues 1–20 (MQSTDNDLSQSPPKLSADEQ) are disordered. Cys-439, Cys-445, Cys-484, and Cys-488 together coordinate [4Fe-4S] cluster. Cys-488 is a siroheme binding site.

Belongs to the nitrite and sulfite reductase 4Fe-4S domain family. As to quaternary structure, alpha(8)-beta(8). The alpha component is a flavoprotein, the beta component is a hemoprotein. Requires siroheme as cofactor. The cofactor is [4Fe-4S] cluster.

The enzyme catalyses hydrogen sulfide + 3 NADP(+) + 3 H2O = sulfite + 3 NADPH + 4 H(+). Its pathway is sulfur metabolism; hydrogen sulfide biosynthesis; hydrogen sulfide from sulfite (NADPH route): step 1/1. Component of the sulfite reductase complex that catalyzes the 6-electron reduction of sulfite to sulfide. This is one of several activities required for the biosynthesis of L-cysteine from sulfate. In Bordetella petrii (strain ATCC BAA-461 / DSM 12804 / CCUG 43448), this protein is Sulfite reductase [NADPH] hemoprotein beta-component.